The primary structure comprises 428 residues: Dihydroorotase (428 aa).

Positions 59 and 61 each coordinate Zn(2+). Substrate is bound by residues 61–63 (HLR) and Asn-93. 3 residues coordinate Zn(2+): Asp-151, His-178, and His-231. Substrate is bound at residue Asn-277. Asp-304 contacts Zn(2+). Asp-304 is a catalytic residue. Residues His-308 and 322–323 (FG) contribute to the substrate site.

The protein belongs to the metallo-dependent hydrolases superfamily. DHOase family. Class I DHOase subfamily. Zn(2+) is required as a cofactor.

The catalysed reaction is (S)-dihydroorotate + H2O = N-carbamoyl-L-aspartate + H(+). It functions in the pathway pyrimidine metabolism; UMP biosynthesis via de novo pathway; (S)-dihydroorotate from bicarbonate: step 3/3. Functionally, catalyzes the reversible cyclization of carbamoyl aspartate to dihydroorotate. The protein is Dihydroorotase of Halalkalibacterium halodurans (strain ATCC BAA-125 / DSM 18197 / FERM 7344 / JCM 9153 / C-125) (Bacillus halodurans).